The primary structure comprises 267 residues: MNKIAIFGANGRMGRVLIEAIDQSQNATLNAAFVRASSSMMGVDVGELAGIGQRGLTVTDANSADFSQIDIVIDFTLPEALEANLALCVQQKKPVVIGTTGLNQQQKDALQRASQHIPIVFAANYSIGVNLLLNLARQTARVMGGTADIEIIEGHHRFKKDAPSGTAVAIGEVIADELGRDLSTCAVYGREGDTGERDQQTIGFATVRAGDIVGEHTALFADIGERIELTHKASSRLTFANGAVKAAVWLKNKSPGLYDMQDVLGLA.

Gly-8–Met-13 contacts NAD(+). Arg-35 is a binding site for NADP(+). NAD(+)-binding positions include Gly-98–Thr-100 and Ala-122–Tyr-125. His-155 (proton donor/acceptor) is an active-site residue. A (S)-2,3,4,5-tetrahydrodipicolinate-binding site is contributed by His-156. The Proton donor role is filled by Lys-159. A (S)-2,3,4,5-tetrahydrodipicolinate-binding site is contributed by Gly-165–Thr-166.

The protein belongs to the DapB family.

Its subcellular location is the cytoplasm. It catalyses the reaction (S)-2,3,4,5-tetrahydrodipicolinate + NAD(+) + H2O = (2S,4S)-4-hydroxy-2,3,4,5-tetrahydrodipicolinate + NADH + H(+). The enzyme catalyses (S)-2,3,4,5-tetrahydrodipicolinate + NADP(+) + H2O = (2S,4S)-4-hydroxy-2,3,4,5-tetrahydrodipicolinate + NADPH + H(+). Its pathway is amino-acid biosynthesis; L-lysine biosynthesis via DAP pathway; (S)-tetrahydrodipicolinate from L-aspartate: step 4/4. Its function is as follows. Catalyzes the conversion of 4-hydroxy-tetrahydrodipicolinate (HTPA) to tetrahydrodipicolinate. The chain is 4-hydroxy-tetrahydrodipicolinate reductase from Pseudoalteromonas atlantica (strain T6c / ATCC BAA-1087).